We begin with the raw amino-acid sequence, 629 residues long: uncharacterized protein (629 aa).

Disordered stretches follow at residues Ser101 to Thr126, Pro172 to Asp209, Ser315 to Arg339, and Gly448 to Pro468. A compositionally biased stretch (acidic residues) spans Thr200 to Asp209. Ser334 is modified (phosphoserine). The segment covering Gly448–Glu463 has biased composition (polar residues).

This is an uncharacterized protein from Schizosaccharomyces pombe (strain 972 / ATCC 24843) (Fission yeast).